Consider the following 104-residue polypeptide: Guanyl-specific ribonuclease Ap1 (104 aa).

Cystine bridges form between Cys2/Cys10 and Cys6/Cys103. His40 is an active-site residue. The active-site Proton acceptor is Glu58. The active-site Proton donor is the His92.

This sequence belongs to the ribonuclease N1/T1 family.

It localises to the secreted. It catalyses the reaction [RNA] containing guanosine + H2O = an [RNA fragment]-3'-guanosine-3'-phosphate + a 5'-hydroxy-ribonucleotide-3'-[RNA fragment].. The sequence is that of Guanyl-specific ribonuclease Ap1 from Aspergillus pallidus.